A 748-amino-acid polypeptide reads, in one-letter code: Antigen peptide transporter 1 (748 aa).

At 1–15 the chain is on the cytoplasmic side; that stretch reads MASSRCPAPRGCRCL. The chain crosses the membrane as a helical span at residues 16–36; the sequence is PGASLAWLGTVLLFLADWVLL. The Lumenal segment spans residues 37-53; sequence RTALPRIFSLLVPTALP. The helical transmembrane segment at 54–76 threads the bilayer; that stretch reads LLRVWAVGLSRWAVLWLGACGVL. Residues 77-92 lie on the Cytoplasmic side of the membrane; the sequence is RATVGSKSENAGAQGW. Residues 93-113 form a helical membrane-spanning segment; it reads LAALEPLAAALGLALPGLALF. At 114–133 the chain is on the lumenal side; that stretch reads RELISWGAPGSADSTRLLHW. A helical membrane pass occupies residues 134–154; the sequence is GSHPSAFVVSYAAALPAAALW. Residues 155–186 are Cytoplasmic-facing; that stretch reads HKLGSLWVPGGQGGSGNPVRRLLGCLGSETRR. A helical membrane pass occupies residues 187 to 207; it reads LSLFLVLVVLSSLGEMAIPFF. Residues 187 to 470 form the ABC transmembrane type-1 domain; it reads LSLFLVLVVL…LLSIYPRVQK (284 aa). Over 208 to 227 the chain is Lumenal; the sequence is TGRLTDWILQDGSADTFTRN. Residues 228-248 traverse the membrane as a helical segment; sequence LTLMSILTIASAVLEFVGDGI. Over 249 to 298 the chain is Cytoplasmic; that stretch reads YNNTMGHVHSHLQGEVFGAVLRQETEFFQQNQTGNITSRVTEDTSTLSDS. The chain crosses the membrane as a helical span at residues 299–319; sequence LSENLSLFLWYLVRGLCLLGI. The Lumenal segment spans residues 320 to 328; it reads MLWGSVSLT. A helical transmembrane segment spans residues 329–349; it reads MVTLVTLPLLFLLPKKVGKWY. Residues 350–418 lie on the Cytoplasmic side of the membrane; that stretch reads QLLEVQVRES…AVNSWTTSIS (69 aa). A part of the peptide-binding site region spans residues 375 to 420; that stretch reads PTVRSFANEEGEAQKFREKLQEIKTLNQKEAVAYAVNSWTTSISGM. A helical transmembrane segment spans residues 419 to 439; it reads GMLLKVGILYIGGQLVTSGAV. The Lumenal portion of the chain corresponds to 440-443; sequence SSGN. A helical membrane pass occupies residues 444–464; it reads LVTFVLYQMQFTQAVEVLLSI. The tract at residues 453 to 487 is part of the peptide-binding site; that stretch reads QFTQAVEVLLSIYPRVQKAVGSSEKIFEYLDRTPR. Residues 465–748 are Cytoplasmic-facing; the sequence is YPRVQKAVGS…MVQAPADAPE (284 aa). The region spanning 503-742 is the ABC transporter domain; that stretch reads VQFQDVSFAY…KGCYWAMVQA (240 aa). Residues 538–546, 641–647, and Gln-701 contribute to the ATP site; these read GPNGSGKST and SQLSGGQ. Ser-545 contacts Mg(2+).

It belongs to the ABC transporter superfamily. ABCB family. MHC peptide exporter (TC 3.A.1.209) subfamily. In terms of assembly, heterodimer of TAP1 and TAP2 (TAP1-TAP2). A component of the peptide loading complex (PLC), interacts via TAPBP with MHCI heterodimer; this interaction mediates peptide-MHCI assembly. Interacts with PSMB5 and PSMB8. The cofactor is Mg(2+).

The protein localises to the endoplasmic reticulum membrane. It carries out the reaction a peptide antigen(in) + ATP + H2O = a peptide antigen(out) + ADP + phosphate + H(+). In terms of biological role, ABC transporter associated with antigen processing. In complex with TAP2 mediates unidirectional translocation of peptide antigens from cytosol to endoplasmic reticulum (ER) for loading onto MHC class I (MHCI) molecules. Uses the chemical energy of ATP to export peptides against the concentration gradient. During the transport cycle alternates between 'inward-facing' state with peptide binding site facing the cytosol to 'outward-facing' state with peptide binding site facing the ER lumen. Peptide antigen binding to ATP-loaded TAP1-TAP2 induces a switch to hydrolysis-competent 'outward-facing' conformation ready for peptide loading onto nascent MHCI molecules. Subsequently ATP hydrolysis resets the transporter to the 'inward facing' state for a new cycle. As a component of the peptide loading complex (PLC), acts as a molecular scaffold essential for peptide-MHCI assembly and antigen presentation. The protein is Antigen peptide transporter 1 (TAP1) of Gorilla gorilla gorilla (Western lowland gorilla).